The chain runs to 180 residues: UPF0340 protein BLi03936/BL03990 (180 aa).

The protein belongs to the UPF0340 family.

This Bacillus licheniformis (strain ATCC 14580 / DSM 13 / JCM 2505 / CCUG 7422 / NBRC 12200 / NCIMB 9375 / NCTC 10341 / NRRL NRS-1264 / Gibson 46) protein is UPF0340 protein BLi03936/BL03990.